Reading from the N-terminus, the 266-residue chain is Gasdermin bGSDM (266 aa).

Residue Cys4 is the site of S-palmitoyl cysteine attachment. A run of 4 beta stranded transmembrane segments spans residues 69 to 85 (INGQKTENLSFSIGINI), 97 to 114 (AGIEAQYNQARKVRFEFS), 163 to 180 (EFTVAAEKSGGGSIQLDV), and 189 to 205 (GKLKVEASVSSQSTVTY). The interval 238 to 266 (AMALDAAGGVMPSDSALLDEGGLLDLEGF) is C-terminal region.

Belongs to the bacterial gasdermin family. As to quaternary structure, monomer in solution. Homooligomer; forms homooligomeric ring-shaped pores when inserted in membranes with 48-54 subunits per ring. Palmitoylation helps stabilize the inactive state; may self palmitoylate. Palmitoylation plays a significant role in pore formation.

It localises to the cytoplasm. It is found in the cell inner membrane. The full-length protein before cleavage is inactive: intramolecular interactions between the N-terminal domain and the C-terminal region as well as the lipid modification, mediate autoinhibition. The pyroptosis-like-inducing activity is carried by the released N-terminal domain (Gasdermin bGSDM, N-terminus). Precursor of a pore-forming protein involved in defense against bacteriophages. Expression of bGSDM and the neighboring protease gene (Ga0334635_1659) is toxic in E.coli. Cleavage of this precursor by its dedicated protease releases the active moiety (gasdermin bGSDM, N-terminus) which inserts into membranes, forming pores and triggering cell death. In terms of biological role, pore-forming protein that causes membrane permeabilization, probably via a pyroptosis-like activity. Makes ring-like pores with an interior pore diameter of 200-300 Angstroms, when integrated in liposomes. This Vitiosangium sp. (strain GDMCC 1.1324) protein is Gasdermin bGSDM.